The sequence spans 835 residues: Serine/threonine-protein kinase TNNI3K (835 aa).

Gly2 carries the N-myristoyl glycine lipid modification. A coiled-coil region spans residues 21–50; the sequence is SESYAIIIERLEDNLQIKENEFQELRHIFG. ANK repeat units lie at residues 66-96, 100-129, 133-162, 166-195, 199-228, 234-263, 269-298, 304-335, 339-368, and 381-410; these read RGLSLLHLCCVCGGNKSHIRALMLKGLRPSR, NGFPALHLAVYKDSPELITSLLHSGADVQQ, GGLTALHIAAIAGHPEAAEVLLQHGANVNV, VFFTPLHIAAYYGHEQVTSVLLKFGADVNV, VGDRPLHLASAKGFFNIVKLLVEEGSKADV, EDHVPLHFCSRFGHHNIVSYLLQSDLEVQP, YGDTPLHLACYNGNFEVAKEIVQVTGTESL, FSETAFHSACTYGKNIDLVKFLLDQNAVNINH, DGHTGLHSACYHGHIRLVQFLLDNGADMNL, and DEQTCLMWAYEKGHDAIVTLLKHYKRPQEE. The Protein kinase domain occupies 463–723; the sequence is IEFHEIIGSG…EVVSKLEECL (261 aa). Residues 469–477 and Lys490 contribute to the ATP site; that span reads IGSGSFGKV. The active-site Proton acceptor is the Asp588.

It belongs to the protein kinase superfamily. TKL Ser/Thr protein kinase family. MAP kinase kinase kinase subfamily. Interacts with TNNI3, ACTC, ACTA1, MYBPC3, AIP, FABP3 and HADHB. Mg(2+) is required as a cofactor. Autophosphorylated.

It localises to the nucleus. The protein resides in the cytoplasm. It carries out the reaction L-seryl-[protein] + ATP = O-phospho-L-seryl-[protein] + ADP + H(+). The enzyme catalyses L-threonyl-[protein] + ATP = O-phospho-L-threonyl-[protein] + ADP + H(+). May play a role in cardiac physiology. In Rattus norvegicus (Rat), this protein is Serine/threonine-protein kinase TNNI3K.